The sequence spans 155 residues: Small ribosomal subunit protein uS7 (155 aa).

It belongs to the universal ribosomal protein uS7 family. Part of the 30S ribosomal subunit. Contacts proteins S9 and S11.

Functionally, one of the primary rRNA binding proteins, it binds directly to 16S rRNA where it nucleates assembly of the head domain of the 30S subunit. Is located at the subunit interface close to the decoding center, probably blocks exit of the E-site tRNA. The polypeptide is Small ribosomal subunit protein uS7 (Sulfurovum sp. (strain NBC37-1)).